We begin with the raw amino-acid sequence, 68 residues long: Cytotoxic linear peptide IsCT (68 aa).

A signal peptide spans 1–23 (MKTQFAILLVALVLFQMFAQSDA). Phe36 is subject to Phenylalanine amide. Positions 40 to 68 (GLSDLDGLDELFDGEISKADRDFLRELMR) are excised as a propeptide.

It belongs to the non-disulfide-bridged peptide (NDBP) superfamily. Short antimicrobial peptide (group 4) family. IsCTf is an enzymatic proteolytic cleavage product of IsCT by the proteases present in the venom. As to expression, expressed by the venom gland.

It localises to the secreted. Its subcellular location is the target cell membrane. Functionally, shows weak hemolytic activity and antibacterial activity against both Gram-positive and Gram-negative bacteria probably by forming pores in the cell membrane. IsCT adopts an amphipathic alpha-helical structure. Shows neither hemolytic, nor antibacterial activities, probably because it cannot adopt amphipathic alpha-helical structure. In Opisthacanthus madagascariensis (Scorpion), this protein is Cytotoxic linear peptide IsCT.